The chain runs to 336 residues: Dihydroorotate dehydrogenase (quinone) (336 aa).

FMN is bound by residues 62–66 (AGLDK) and Thr-86. Lys-66 contacts substrate. A substrate-binding site is contributed by 111 to 115 (NRMGF). Positions 139 and 172 each coordinate FMN. A substrate-binding site is contributed by Asn-172. Residue Ser-175 is the Nucleophile of the active site. Residue Asn-177 coordinates substrate. The FMN site is built by Lys-217 and Thr-245. 246–247 (NT) is a binding site for substrate. Residues Gly-268, Gly-297, and 318–319 (YS) contribute to the FMN site.

The protein belongs to the dihydroorotate dehydrogenase family. Type 2 subfamily. In terms of assembly, monomer. The cofactor is FMN.

The protein localises to the cell membrane. It catalyses the reaction (S)-dihydroorotate + a quinone = orotate + a quinol. Its pathway is pyrimidine metabolism; UMP biosynthesis via de novo pathway; orotate from (S)-dihydroorotate (quinone route): step 1/1. In terms of biological role, catalyzes the conversion of dihydroorotate to orotate with quinone as electron acceptor. This Proteus mirabilis (strain HI4320) protein is Dihydroorotate dehydrogenase (quinone).